Reading from the N-terminus, the 290-residue chain is L-fucono-1,5-lactonase (290 aa).

This sequence belongs to the metallo-dependent hydrolases superfamily.

It carries out the reaction L-fucono-1,5-lactone + H2O = L-fuconate + H(+). It catalyses the reaction L-fucono-1,4-lactone + H2O = L-fuconate + H(+). The catalysed reaction is D-arabinono-1,4-lactone + H2O = D-arabinonate + H(+). The enzyme catalyses L-xylono-1,4-lactone + H2O = L-xylonate + H(+). It carries out the reaction L-galactono-1,4-lactone + H2O = L-galactonate + H(+). Its function is as follows. Catalyzes the hydrolysis of L-fucono-1,5-lactone to L-fuconate. Can also hydrolyze L-fucono-1,4-lactone, L-galactono-1,4-lactone D-arabinono-1,4-lactone and L-xylono-1,4-lactone. In Burkholderia ambifaria (strain ATCC BAA-244 / DSM 16087 / CCUG 44356 / LMG 19182 / AMMD) (Burkholderia cepacia (strain AMMD)), this protein is L-fucono-1,5-lactonase.